A 267-amino-acid chain; its full sequence is Imidazole glycerol phosphate synthase subunit HisF (267 aa).

Active-site residues include D22 and D141.

This sequence belongs to the HisA/HisF family. As to quaternary structure, heterodimer of HisH and HisF.

The protein resides in the cytoplasm. It carries out the reaction 5-[(5-phospho-1-deoxy-D-ribulos-1-ylimino)methylamino]-1-(5-phospho-beta-D-ribosyl)imidazole-4-carboxamide + L-glutamine = D-erythro-1-(imidazol-4-yl)glycerol 3-phosphate + 5-amino-1-(5-phospho-beta-D-ribosyl)imidazole-4-carboxamide + L-glutamate + H(+). Its pathway is amino-acid biosynthesis; L-histidine biosynthesis; L-histidine from 5-phospho-alpha-D-ribose 1-diphosphate: step 5/9. Functionally, IGPS catalyzes the conversion of PRFAR and glutamine to IGP, AICAR and glutamate. The HisF subunit catalyzes the cyclization activity that produces IGP and AICAR from PRFAR using the ammonia provided by the HisH subunit. In Mycobacterium bovis (strain ATCC BAA-935 / AF2122/97), this protein is Imidazole glycerol phosphate synthase subunit HisF.